The primary structure comprises 247 residues: Ribonuclease 3 (247 aa).

The RNase III domain occupies 21-149 (VDHQPLLDHL…LFGAIFRQHG (129 aa)). E62 lines the Mg(2+) pocket. Residue D66 is part of the active site. The Mg(2+) site is built by D135 and E138. E138 is an active-site residue. A DRBM domain is found at 176–244 (DWKTTLQEEL…AHQAFRKLRE (69 aa)).

This sequence belongs to the ribonuclease III family. In terms of assembly, homodimer. Mg(2+) serves as cofactor.

It localises to the cytoplasm. The enzyme catalyses Endonucleolytic cleavage to 5'-phosphomonoester.. Functionally, digests double-stranded RNA. Involved in the processing of primary rRNA transcript to yield the immediate precursors to the large and small rRNAs (23S and 16S). Processes some mRNAs, and tRNAs when they are encoded in the rRNA operon. Processes pre-crRNA and tracrRNA of type II CRISPR loci if present in the organism. This is Ribonuclease 3 from Corynebacterium glutamicum (strain ATCC 13032 / DSM 20300 / JCM 1318 / BCRC 11384 / CCUG 27702 / LMG 3730 / NBRC 12168 / NCIMB 10025 / NRRL B-2784 / 534).